The sequence spans 433 residues: UDP-N-acetylglucosamine 1-carboxyvinyltransferase 2 (433 aa).

23-24 (KN) is a binding site for phosphoenolpyruvate. Arginine 96 is a UDP-N-acetyl-alpha-D-glucosamine binding site. Residue cysteine 120 is the Proton donor of the active site. Residue cysteine 120 is modified to 2-(S-cysteinyl)pyruvic acid O-phosphothioketal. Residues 125–129 (RPIDL), aspartate 308, and valine 330 each bind UDP-N-acetyl-alpha-D-glucosamine.

Belongs to the EPSP synthase family. MurA subfamily.

The protein localises to the cytoplasm. It carries out the reaction phosphoenolpyruvate + UDP-N-acetyl-alpha-D-glucosamine = UDP-N-acetyl-3-O-(1-carboxyvinyl)-alpha-D-glucosamine + phosphate. It functions in the pathway cell wall biogenesis; peptidoglycan biosynthesis. Cell wall formation. Adds enolpyruvyl to UDP-N-acetylglucosamine. This Enterococcus faecalis (strain ATCC 700802 / V583) protein is UDP-N-acetylglucosamine 1-carboxyvinyltransferase 2.